The primary structure comprises 277 residues: Caspase-6 (277 aa).

The propeptide occupies 1 to 5; the sequence is MTETD. The segment at 25–27 is tri-arginine exosite; that stretch reads KRR. Phosphoserine is present on serine 62. Residue histidine 104 is part of the active site. The interval 108 to 125 is 130's region; the sequence is NHIYAYDAKIEIQTLTGL. Residue cysteine 146 is part of the active site. The propeptide occupies 163–176; it reads HQTDKLDDNVTQVD. Serine 240 carries the post-translational modification Phosphoserine. Residues cysteine 247 and cysteine 260 are each lipidated (S-palmitoyl cysteine).

Belongs to the peptidase C14A family. In terms of assembly, heterotetramer that consists of two anti-parallel arranged heterodimers, each one formed by a 18 kDa (p18) and a 11 kDa (p11) subunits. Interacts with BIRC6/bruce. Interacts with RIPK3. Heterotetramer that consists of two anti-parallel arranged heterodimers, each one formed by a 18 kDa (Caspase-6 subunit p18) and a 11 kDa (Caspase-6 subunit p11) subunit. Phosphorylated by NUAK1; phosphorylation inhibits self-activation. Phosphorylation at Ser-240 by AMP-activated protein kinase (PRKAA1 or PRKAA2) inhibits autocleavage, preventing caspase activation, thereby preventing hepatocyte apoptosis. Post-translationally, palmitoylation by ZDHHC17 blocks dimerization and subsequent activation, leading to inhibit the cysteine protease activity. In terms of processing, can be cleaved and activated by different caspases, depending on the context. Cleaved and activated by caspase-8 (CASP8) and subsequently by caspase-3 (CASP3). Can also undergo autoactivation by mediating autocleavage at Asp-162 and Asp-176, while it is not able to cleave its N-terminal disordered prodomain. Cleaved and activated by CASP1, possibly in the context of inflammation.

It localises to the cytoplasm. The protein localises to the nucleus. The enzyme catalyses Strict requirement for Asp at position P1 and has a preferred cleavage sequence of Val-Glu-His-Asp-|-.. With respect to regulation, during activation, the N-terminal disordered prodomain is removed by cleavage. Concomitantly, double cleavage gives rise to a large 18-kDa and a small 11-kDa subunit. The two large and two small subunits then assemble to form the active CASP6 complex. Can be cleaved and activated by different caspases, depending on the context. Cleaved and activated by caspase-8 (CASP8) and subsequently by caspase-3 (CASP3). Can also undergo autoactivation by mediating autocleavage at Asp-162 and Asp-176, while it is not able to cleave its N-terminal disordered prodomain. Intramolecular cleavage at Asp-176 is a prerequisite for CASP6 self-activation. Cleaved and activated by CASP1 in neurons, possibly in the context of inflammation. Phosphorylation at Ser-240 inhibits autocleavage, preventing caspase activation. Functionally, cysteine protease that plays essential roles in programmed cell death, axonal degeneration, development and innate immunity. Acts as a non-canonical executioner caspase during apoptosis: localizes in the nucleus and cleaves the nuclear structural protein NUMA1 and lamin A/LMNA thereby inducing nuclear shrinkage and fragmentation. Lamin-A/LMNA cleavage is required for chromatin condensation and nuclear disassembly during apoptotic execution. Acts as a regulator of liver damage by promoting hepatocyte apoptosis: in absence of phosphorylation by AMP-activated protein kinase (AMPK), catalyzes cleavage of BID, leading to cytochrome c release, thereby participating in nonalcoholic steatohepatitis. Cleaves PARK7/DJ-1 in cells undergoing apoptosis. Involved in intrinsic apoptosis by mediating cleavage of RIPK1. Furthermore, cleaves many transcription factors such as NF-kappa-B and cAMP response element-binding protein/CREBBP. Cleaves phospholipid scramblase proteins XKR4 and XKR9. In addition to apoptosis, involved in different forms of programmed cell death. Plays an essential role in defense against viruses by acting as a central mediator of the ZBP1-mediated pyroptosis, apoptosis, and necroptosis (PANoptosis), independently of its cysteine protease activity. PANoptosis is a unique inflammatory programmed cell death, which provides a molecular scaffold that allows the interactions and activation of machinery required for inflammasome/pyroptosis, apoptosis and necroptosis. Mechanistically, interacts with RIPK3 and enhances the interaction between RIPK3 and ZBP1, leading to ZBP1-mediated inflammasome activation and cell death. Plays an essential role in axon degeneration during axon pruning which is the remodeling of axons during neurogenesis but not apoptosis. Regulates B-cell programs both during early development and after antigen stimulation. The protein is Caspase-6 of Rattus norvegicus (Rat).